Reading from the N-terminus, the 794-residue chain is Furin (794 aa).

An N-terminal signal peptide occupies residues M1–G26. The propeptide at Q27 to R107 is inhibition peptide. Over D108–E715 the chain is Lumenal. D115 contacts Ca(2+). Positions Q121–V435 constitute a Peptidase S8 domain. D153 functions as the Charge relay system in the catalytic mechanism. Residue D154 participates in substrate binding. Ca(2+) is bound by residues D162, D174, D179, and D181. The disordered stretch occupies residues D162–Q183. D191 to N192 contacts substrate. The active-site Charge relay system is H194. Positions 205, 208, 210, and 212 each coordinate Ca(2+). Cystine bridges form between C211/C360 and C303/C333. Substrate is bound by residues E236, S253–D258, D264, and A292–N295. A Ca(2+)-binding site is contributed by D258. D301 provides a ligand contact to Ca(2+). Substrate contacts are provided by D306 and Y308. E331 serves as a coordination point for Ca(2+). S368 serves as the catalytic Charge relay system. S368 is a substrate binding site. 2 N-linked (GlcNAc...) asparagine glycosylation sites follow: N387 and N440. Residues V444–E576 enclose the P/Homo B domain. Cysteines 450 and 474 form a disulfide. Positions R498–D500 match the Cell attachment site motif. N553 carries an N-linked (GlcNAc...) asparagine glycan. 2 FU repeats span residues G577–P620 and A638–S681. The tract at residues Q673–P696 is disordered. A compositionally biased stretch (low complexity) spans S676–P687. The chain crosses the membrane as a helical span at residues V716–L738. Residues R739–L794 are Cytoplasmic-facing. The segment at Y759 to L762 is cell surface signal. Over residues W767–G780 the composition is skewed to acidic residues. Positions W767–L794 are disordered. Residues S773 and S775 each carry the phosphoserine; by CK2 modification. The Trans Golgi network signal signature appears at S773–E779.

This sequence belongs to the peptidase S8 family. Furin subfamily. Interacts with FLNA. Binds to PACS1 which mediates TGN localization and connection to clathrin adapters. Interacts with LAMP1, LAMP2 and LAMP3. The cofactor is Ca(2+). The inhibition peptide, which plays the role of an intramolecular chaperone, is autocatalytically removed in the endoplasmic reticulum (ER) and remains non-covalently bound to furin as a potent autoinhibitor. Following transport to the trans Golgi, a second cleavage within the inhibition propeptide results in propeptide dissociation and furin activation. Post-translationally, phosphorylation is required for TGN localization of the endoprotease. In vivo, exists as di-, mono- and non-phosphorylated forms. In terms of tissue distribution, seems to be expressed ubiquitously.

The protein resides in the golgi apparatus. It localises to the trans-Golgi network membrane. The protein localises to the cell membrane. It is found in the secreted. Its subcellular location is the endosome membrane. The catalysed reaction is Release of mature proteins from their proproteins by cleavage of -Arg-Xaa-Yaa-Arg-|-Zaa- bonds, where Xaa can be any amino acid and Yaa is Arg or Lys. Releases albumin, complement component C3 and von Willebrand factor from their respective precursors.. Inhibited by the not secondly cleaved propeptide. Inhibited by m-guanidinomethyl-phenylacetyl-Arg-Val-Arg-(amidomethyl)-benzamidine (m-guanidinomethyl-Phac-RVR-Amb) and 4-guanidinomethyl-phenylacetyl-Arg-Tle-Arg-4-amidinobenzylamide (MI-1148). Inhibited by Decanoyl-Arg-Val-Lys-Arg-chloromethylketone (decanoyl-RVKR-CMK). Inhibited by heparin/heparan sulfate-binding. Its function is as follows. Ubiquitous endoprotease within constitutive secretory pathways capable of cleavage at the RX(K/R)R consensus motif. Mediates processing of TGFB1, an essential step in TGF-beta-1 activation. Converts through proteolytic cleavage the non-functional Brain natriuretic factor prohormone into its active hormone BNP(1-32). By mediating processing of accessory subunit ATP6AP1/Ac45 of the V-ATPase, regulates the acidification of dense-core secretory granules in islets of Langerhans cells. In terms of biological role, (Microbial infection) Cleaves and activates diphtheria toxin DT. (Microbial infection) Cleaves and activates anthrax toxin protective antigen (PA). Functionally, (Microbial infection) Cleaves and activates HIV-1 virus Envelope glycoprotein gp160. Its function is as follows. (Microbial infection) Required for H7N1 and H5N1 influenza virus infection probably by cleaving hemagglutinin. In terms of biological role, (Microbial infection) Able to cleave S.pneumoniae serine-rich repeat protein PsrP. (Microbial infection) Facilitates human coronaviruses EMC and SARS-CoV-2 infections by proteolytically cleaving the spike protein at the monobasic S1/S2 cleavage site. This cleavage is essential for spike protein-mediated cell-cell fusion and entry into human lung cells. Functionally, (Microbial infection) Facilitates mumps virus infection by proteolytically cleaving the viral fusion protein F. This is Furin from Homo sapiens (Human).